A 220-amino-acid polypeptide reads, in one-letter code: MIKALIFDFDGLILDTETHEYEVLQEIFEEHGSVLPLSVWGKVIGTAAGFRPFEYLEEQIGKKLNHEELTQLRRERFAKRMESEKARPGVEAYLNAAKDLGLKIGLASSSDYKWVSGHLKQIGLFDDFEVIQTADDVEEVKPNPELYLLAAKNLGVSPAECLAFEDSVNGSIAAKRAGMKCVIVPNKVTGTLMFEDYDHRLESMAEMELALLLDHLNSQN.

Catalysis depends on D8, which acts as the Nucleophile. Positions 8, 10, and 166 each coordinate a divalent metal cation. The Proton donor role is filled by D10.

The protein belongs to the HAD-like hydrolase superfamily. CbbY/CbbZ/Gph/YieH family. Requires a divalent metal cation as cofactor.

The chain is Putative phosphatase YhcW (yhcW) from Bacillus subtilis (strain 168).